The sequence spans 414 residues: Enolase (414 aa).

Position 162 (Gln162) interacts with (2R)-2-phosphoglycerate. The active-site Proton donor is the Glu204. Positions 239, 280, and 307 each coordinate Mg(2+). (2R)-2-phosphoglycerate-binding residues include Lys332, Arg361, Ser362, and Lys383. Lys332 (proton acceptor) is an active-site residue.

The protein belongs to the enolase family. It depends on Mg(2+) as a cofactor.

Its subcellular location is the cytoplasm. It is found in the secreted. The protein resides in the cell surface. The enzyme catalyses (2R)-2-phosphoglycerate = phosphoenolpyruvate + H2O. The protein operates within carbohydrate degradation; glycolysis; pyruvate from D-glyceraldehyde 3-phosphate: step 4/5. Functionally, catalyzes the reversible conversion of 2-phosphoglycerate (2-PG) into phosphoenolpyruvate (PEP). It is essential for the degradation of carbohydrates via glycolysis. The polypeptide is Enolase (Campylobacter jejuni subsp. doylei (strain ATCC BAA-1458 / RM4099 / 269.97)).